Here is an 85-residue protein sequence, read N- to C-terminus: uncharacterized protein (85 aa).

This sequence belongs to the YciI family.

This is an uncharacterized protein from Bacillus subtilis (strain 168).